The primary structure comprises 298 residues: N-acetylmuramic acid 6-phosphate etherase (298 aa).

The SIS domain occupies 55–218; the sequence is IHTQVSGGGR…STGLMIKSGK (164 aa). Catalysis depends on glutamate 83, which acts as the Proton donor. Residue glutamate 114 is part of the active site.

Belongs to the GCKR-like family. MurNAc-6-P etherase subfamily. Homodimer.

The enzyme catalyses N-acetyl-D-muramate 6-phosphate + H2O = N-acetyl-D-glucosamine 6-phosphate + (R)-lactate. Its pathway is amino-sugar metabolism; 1,6-anhydro-N-acetylmuramate degradation. The protein operates within amino-sugar metabolism; N-acetylmuramate degradation. It participates in cell wall biogenesis; peptidoglycan recycling. Functionally, specifically catalyzes the cleavage of the D-lactyl ether substituent of MurNAc 6-phosphate, producing GlcNAc 6-phosphate and D-lactate. Together with AnmK, is also required for the utilization of anhydro-N-acetylmuramic acid (anhMurNAc) either imported from the medium or derived from its own cell wall murein, and thus plays a role in cell wall recycling. This chain is N-acetylmuramic acid 6-phosphate etherase, found in Escherichia coli O6:K15:H31 (strain 536 / UPEC).